Consider the following 166-residue polypeptide: MKTPRLPIAIQQAVMRSLRDALARANLKLGRNYPEPKLVYQQRGTAAGTAWLESYEIRLNPVLLMENQQAFIDEVVPHELAHLLVWKHFGRVPPHGKEWKWMMESVLGVPARRTHQFELDSVRANTFPYRCRCQQHQLTIRRHNRVVRGETQYRCVRCGDTLVAEN.

The SprT-like domain occupies 19–164 (RDALARANLK…CVRCGDTLVA (146 aa)). Residue His78 coordinates Zn(2+). Residue Glu79 is part of the active site. His82 lines the Zn(2+) pocket.

This sequence belongs to the SprT family. The cofactor is Zn(2+).

Its subcellular location is the cytoplasm. This is Protein SprT from Cronobacter sakazakii (strain ATCC BAA-894) (Enterobacter sakazakii).